The sequence spans 554 residues: (E)-beta-caryophyllene synthase (554 aa).

2 residues coordinate Mn(2+): aspartate 313 and aspartate 317. A DDXXD motif motif is present at residues aspartate 313–aspartate 317. 2 homodimerization regions span residues tyrosine 319–leucine 325 and glutamate 391–isoleucine 427. The Mn(2+) site is built by aspartate 457 and glutamate 465.

It belongs to the terpene synthase family. Homodimer. Mn(2+) is required as a cofactor. The cofactor is Mg(2+). Expressed in peltate glandular trichomes. Present at low levels in flowers, leaves and stems.

It carries out the reaction (2E,6E)-farnesyl diphosphate = (-)-(E)-beta-caryophyllene + diphosphate. The catalysed reaction is (2E,6E)-farnesyl diphosphate = alpha-humulene + diphosphate. Its pathway is secondary metabolite biosynthesis; terpenoid biosynthesis. In terms of biological role, involved in the biosynthesis of phenolic sesquiterpenes natural products. Sesquiterpene synthase converting (2E,6E)-farnesyl diphosphate (FPP) to (E)-beta-caryophyllene and alpha-humulene. The protein is (E)-beta-caryophyllene synthase of Origanum vulgare (Wild marjoram).